An 89-amino-acid polypeptide reads, in one-letter code: Small ribosomal subunit protein uS15 (89 aa).

This sequence belongs to the universal ribosomal protein uS15 family. In terms of assembly, part of the 30S ribosomal subunit. Forms a bridge to the 50S subunit in the 70S ribosome, contacting the 23S rRNA.

Its function is as follows. One of the primary rRNA binding proteins, it binds directly to 16S rRNA where it helps nucleate assembly of the platform of the 30S subunit by binding and bridging several RNA helices of the 16S rRNA. Functionally, forms an intersubunit bridge (bridge B4) with the 23S rRNA of the 50S subunit in the ribosome. This chain is Small ribosomal subunit protein uS15, found in Gloeothece citriformis (strain PCC 7424) (Cyanothece sp. (strain PCC 7424)).